Consider the following 463-residue polypeptide: Putative glycine--tRNA ligase, cytoplasmic (463 aa).

The interval T25–E54 is disordered. A compositionally biased stretch (basic and acidic residues) spans N44–E54. 2 residues coordinate substrate: R153 and E239. ATP contacts are provided by residues R271–E273 and L281–F286. Residues F286–E290 and N376 each bind substrate. E398–C399 is an ATP binding site.

Belongs to the class-II aminoacyl-tRNA synthetase family. Homodimer.

The protein resides in the cytoplasm. It catalyses the reaction tRNA(Gly) + glycine + ATP = glycyl-tRNA(Gly) + AMP + diphosphate. Catalyzes the attachment of glycine to tRNA(Gly). Is also able produce diadenosine tetraphosphate (Ap4A), a universal pleiotropic signaling molecule needed for cell regulation pathways, by direct condensation of 2 ATPs. This chain is Putative glycine--tRNA ligase, cytoplasmic, found in Arabidopsis thaliana (Mouse-ear cress).